Here is a 474-residue protein sequence, read N- to C-terminus: Dihydrolipoyl dehydrogenase (474 aa).

FAD-binding positions include 34–42, lysine 51, and glycine 114; that span reads EKEKLGGTC. Cysteine 42 and cysteine 47 are joined by a disulfide. NAD(+) is bound by residues 188-192, glutamate 211, valine 245, and 278-281; these read GGGVI and SIGR. Positions 320 and 328 each coordinate FAD. Histidine 453 (proton acceptor) is an active-site residue.

This sequence belongs to the class-I pyridine nucleotide-disulfide oxidoreductase family. As to quaternary structure, homodimer. Requires FAD as cofactor.

Its subcellular location is the cytoplasm. The catalysed reaction is N(6)-[(R)-dihydrolipoyl]-L-lysyl-[protein] + NAD(+) = N(6)-[(R)-lipoyl]-L-lysyl-[protein] + NADH + H(+). The branched-chain alpha-keto dehydrogenase complex catalyzes the overall conversion of alpha-keto acids to acyl-CoA and CO(2). It contains multiple copies of 3 enzymatic components: branched-chain alpha-keto acid decarboxylase (E1), lipoamide acyltransferase (E2) and lipoamide dehydrogenase (E3). This is Dihydrolipoyl dehydrogenase (bfmBC) from Bacillus subtilis (strain 168).